The following is a 982-amino-acid chain: Chromosome partition protein Smc (982 aa).

33 to 40 (PNGSGKSN) contributes to the ATP binding site. Coiled-coil stretches lie at residues 171–231 (RYTK…ELAV), 280–310 (SADM…VIID), and 337–377 (QTQL…QIEK). The 120-residue stretch at 416-535 (TGILNTLGTF…AKDLNSAINL (120 aa)) folds into the SMC hinge domain. Coiled coils occupy residues 575 to 718 (SASL…SARE) and 753 to 822 (VKLS…IASN).

Belongs to the SMC family. As to quaternary structure, homodimer.

It is found in the cytoplasm. Its function is as follows. Required for chromosome condensation and partitioning. The chain is Chromosome partition protein Smc from Mycoplasma genitalium (strain ATCC 33530 / DSM 19775 / NCTC 10195 / G37) (Mycoplasmoides genitalium).